We begin with the raw amino-acid sequence, 539 residues long: CTP synthase (539 aa).

The segment at 1–267 is amidoligase domain; sequence MKEAKFIFVT…GTQVLEHFHL (267 aa). Ser-15 lines the CTP pocket. Ser-15 contacts UTP. Residues 16-21 and Asp-73 contribute to the ATP site; that span reads SLGKGL. Mg(2+)-binding residues include Asp-73 and Glu-141. CTP contacts are provided by residues 148–150, 188–193, and Lys-224; these read DIE and KTKPTQ. Residues 188–193 and Lys-224 each bind UTP; that span reads KTKPTQ. The 245-residue stretch at 292–536 folds into the Glutamine amidotransferase type-1 domain; sequence TVSIVGKYTE…IKAVVNKVKK (245 aa). Residue Gly-359 participates in L-glutamine binding. The active-site Nucleophile; for glutamine hydrolysis is the Cys-386. L-glutamine-binding positions include 387 to 390, Glu-410, and Arg-464; that span reads LGMQ. Residues His-509 and Glu-511 contribute to the active site.

It belongs to the CTP synthase family. Homotetramer.

It catalyses the reaction UTP + L-glutamine + ATP + H2O = CTP + L-glutamate + ADP + phosphate + 2 H(+). The catalysed reaction is L-glutamine + H2O = L-glutamate + NH4(+). The enzyme catalyses UTP + NH4(+) + ATP = CTP + ADP + phosphate + 2 H(+). The protein operates within pyrimidine metabolism; CTP biosynthesis via de novo pathway; CTP from UDP: step 2/2. Its activity is regulated as follows. Allosterically activated by GTP, when glutamine is the substrate; GTP has no effect on the reaction when ammonia is the substrate. The allosteric effector GTP functions by stabilizing the protein conformation that binds the tetrahedral intermediate(s) formed during glutamine hydrolysis. Inhibited by the product CTP, via allosteric rather than competitive inhibition. Catalyzes the ATP-dependent amination of UTP to CTP with either L-glutamine or ammonia as the source of nitrogen. Regulates intracellular CTP levels through interactions with the four ribonucleotide triphosphates. In Wolbachia sp. subsp. Brugia malayi (strain TRS), this protein is CTP synthase.